The primary structure comprises 1073 residues: Semaphorin-6D (1073 aa).

An N-terminal signal peptide occupies residues 1–20 (MGFLLLWFCVLFLLVSRLRA). Residues 21 to 662 (VSFPEDDEPL…GESNQMVHMN (642 aa)) are Extracellular-facing. The region spanning 27-512 (DEPLNTVDYH…FSSCVVRIPL (486 aa)) is the Sema domain. Asparagine 51 carries N-linked (GlcNAc...) asparagine glycosylation. Disulfide bonds link cysteine 108-cysteine 118, cysteine 136-cysteine 145, cysteine 259-cysteine 370, and cysteine 284-cysteine 329. An N-linked (GlcNAc...) asparagine glycan is attached at asparagine 283. 2 N-linked (GlcNAc...) asparagine glycosylation sites follow: asparagine 435 and asparagine 461. Intrachain disulfides connect cysteine 477-cysteine 506, cysteine 515-cysteine 533, cysteine 521-cysteine 568, and cysteine 525-cysteine 541. In terms of domain architecture, PSI spans 514–569 (RCERYGSCKKSCIASRDPYCGWLSQGVCERVTLGMLPGGYEQDTEYGNTAHLGDCH). Residue asparagine 631 is glycosylated (N-linked (GlcNAc...) asparagine). A helical transmembrane segment spans residues 663–683 (VLITCVFAAFVLGAFIAGVAV). The Cytoplasmic segment spans residues 684–1073 (YCYRDMFVRK…SVRPLNKYTY (390 aa)). 3 positions are modified to phosphoserine: serine 723, serine 734, and serine 744. Disordered stretches follow at residues 745-825 (RKEL…GHIP), 839-876 (TSFSNSNAHKAEKKLQSMDHPLTKSSSKREHRRSVDSR), 919-986 (PPKV…SPNG), and 1021-1073 (LQPS…KYTY). Threonine 773 is subject to Phosphothreonine. Basic and acidic residues predominate over residues 790–806 (SHSEKAHSHGASRKEHP). Serine 931, serine 957, and serine 983 each carry phosphoserine. Residues 931–942 (SPPSTLPRNSPT) are compositionally biased toward polar residues. Composition is skewed to polar residues over residues 1021 to 1037 (LQPSLSRQSSYTSNGTL) and 1059 to 1073 (VPQTTSVRPLNKYTY).

This sequence belongs to the semaphorin family. In terms of tissue distribution, expressed in brain and lung.

The protein localises to the cell membrane. Its function is as follows. Shows growth cone collapsing activity on dorsal root ganglion (DRG) neurons in vitro. May be a stop signal for the DRG neurons in their target areas, and possibly also for other neurons. May also be involved in the maintenance and remodeling of neuronal connections. Ligand of TREM2 with PLXNA1 as coreceptor in dendritic cells, plays a role in the generation of immune responses and skeletal homeostasis. This is Semaphorin-6D (Sema6d) from Mus musculus (Mouse).